The sequence spans 331 residues: Lipoyl synthase (331 aa).

Positions 1-33 (MSDALIATSSEAPQSPAEQYDPTRKQKSADKTA) are disordered. Residues 7-17 (ATSSEAPQSPA) show a composition bias toward polar residues. Positions 21 to 33 (DPTRKQKSADKTA) are enriched in basic and acidic residues. 7 residues coordinate [4Fe-4S] cluster: Cys78, Cys83, Cys89, Cys104, Cys108, Cys111, and Ser318. A Radical SAM core domain is found at 89 to 307 (CFGKGTATFM…EEEAYKMGFT (219 aa)).

This sequence belongs to the radical SAM superfamily. Lipoyl synthase family. [4Fe-4S] cluster is required as a cofactor.

The protein resides in the cytoplasm. The enzyme catalyses [[Fe-S] cluster scaffold protein carrying a second [4Fe-4S](2+) cluster] + N(6)-octanoyl-L-lysyl-[protein] + 2 oxidized [2Fe-2S]-[ferredoxin] + 2 S-adenosyl-L-methionine + 4 H(+) = [[Fe-S] cluster scaffold protein] + N(6)-[(R)-dihydrolipoyl]-L-lysyl-[protein] + 4 Fe(3+) + 2 hydrogen sulfide + 2 5'-deoxyadenosine + 2 L-methionine + 2 reduced [2Fe-2S]-[ferredoxin]. Its pathway is protein modification; protein lipoylation via endogenous pathway; protein N(6)-(lipoyl)lysine from octanoyl-[acyl-carrier-protein]: step 2/2. Catalyzes the radical-mediated insertion of two sulfur atoms into the C-6 and C-8 positions of the octanoyl moiety bound to the lipoyl domains of lipoate-dependent enzymes, thereby converting the octanoylated domains into lipoylated derivatives. This Cupriavidus necator (strain ATCC 17699 / DSM 428 / KCTC 22496 / NCIMB 10442 / H16 / Stanier 337) (Ralstonia eutropha) protein is Lipoyl synthase.